The chain runs to 534 residues: Prolyl 4-hydroxylase subunit alpha-1 (534 aa).

Residues 1–17 form the signal peptide; that stretch reads MIWYILVVGILLPQSLA. A glycan (N-linked (GlcNAc...) asparagine) is linked at N113. The stretch at 205–238 is one TPR repeat; sequence VSVLDYLSYAVYQQGDLDKALLLTKKLLELDPEH. The interval 258-277 is disordered; the sequence is ANKSSSDDQSDQKTTLKKKG. N259 is a glycosylation site (N-linked (GlcNAc...) asparagine). The Fe2OG dioxygenase domain occupies 411-519; the sequence is TAEELQVANY…KWVSNKWLHE (109 aa). Residues H429, D431, and H500 each contribute to the Fe cation site. 2-oxoglutarate is bound at residue K510.

This sequence belongs to the P4HA family. Heterotetramer of two alpha-1 chains and two beta chains (P4HB)(the beta chain is the multi-functional PDI), where P4HB plays the role of a structural subunit; this tetramer catalyzes the formation of 4-hydroxyproline in collagen. Fe(2+) serves as cofactor. L-ascorbate is required as a cofactor.

It is found in the endoplasmic reticulum lumen. The catalysed reaction is L-prolyl-[collagen] + 2-oxoglutarate + O2 = trans-4-hydroxy-L-prolyl-[collagen] + succinate + CO2. Its function is as follows. Catalyzes the post-translational formation of 4-hydroxyproline in -Xaa-Pro-Gly- sequences in collagens and other proteins. In Bos taurus (Bovine), this protein is Prolyl 4-hydroxylase subunit alpha-1 (P4HA1).